The primary structure comprises 827 residues: Rho GTPase-activating protein 6 (827 aa).

The PH domain maps to 18–125 (TVYKSGPLFI…WKAALEQALA (108 aa)). Residues 172-371 (LALEEIDGSP…ALLEDYGNMI (200 aa)) enclose the Rho-GAP domain. Disordered regions lie at residues 379–437 (CSTS…SDYA) and 517–561 (YTTS…SSGN). The span at 401-412 (IVVKHPDLHTLD) shows a compositional bias: basic and acidic residues. Acidic residues predominate over residues 413–423 (IEEGETDDDND). Residues 517–543 (YTTSAEKPASKTTGSSTVNSKRSSSWG) are compositionally biased toward polar residues. The stretch at 560-684 (GNDELLIQRL…HQLSQQRQHH (125 aa)) forms a coiled coil.

Its function is as follows. Acts as a GTPase activator for the Rac-type GTPase by converting it to an inactive GDP-bound state. The protein is Rho GTPase-activating protein 6 (ROPGAP6) of Arabidopsis thaliana (Mouse-ear cress).